Reading from the N-terminus, the 115-residue chain is U2-ctenitoxin-Pn1b (115 aa).

The N-terminal stretch at 1–17 (MKVAVIILSILVLAAAS) is a signal peptide. The propeptide occupies 18-61 (ESIEEYREDFSRPNAMERSANDWIPTAPSAVERSADFAVEELER). Intrachain disulfides connect Cys-64–Cys-78, Cys-71–Cys-84, Cys-75–Cys-113, Cys-77–Cys-98, and Cys-86–Cys-96. Residue Lys-115 is a propeptide.

Belongs to the neurotoxin 03 (Tx2) family. 04 subfamily. In terms of tissue distribution, expressed by the venom gland.

Its subcellular location is the secreted. Its function is as follows. Blocks voltage-gated sodium channels (Nav). The protein is U2-ctenitoxin-Pn1b of Phoneutria nigriventer (Brazilian armed spider).